The primary structure comprises 200 residues: Recombination protein RecR (200 aa).

Residues 57–72 form a C4-type zinc finger; it reads CRQCRTLTEQELCPQC. Residues 80-175 form the Toprim domain; the sequence is TQLCVVEGPV…TATRIAHGVP (96 aa).

This sequence belongs to the RecR family.

May play a role in DNA repair. It seems to be involved in an RecBC-independent recombinational process of DNA repair. It may act with RecF and RecO. The polypeptide is Recombination protein RecR (Pseudomonas entomophila (strain L48)).